Reading from the N-terminus, the 143-residue chain is Large ribosomal subunit protein uL11 (143 aa).

Belongs to the universal ribosomal protein uL11 family. Part of the ribosomal stalk of the 50S ribosomal subunit. Interacts with L10 and the large rRNA to form the base of the stalk. L10 forms an elongated spine to which L12 dimers bind in a sequential fashion forming a multimeric L10(L12)X complex. Post-translationally, one or more lysine residues are methylated.

In terms of biological role, forms part of the ribosomal stalk which helps the ribosome interact with GTP-bound translation factors. The sequence is that of Large ribosomal subunit protein uL11 from Herminiimonas arsenicoxydans.